Consider the following 123-residue polypeptide: DNA-directed RNA polymerase subunit omega (123 aa).

The disordered stretch occupies residues 72-100; it reads QRVLPSEDEEDAAREERGQQMEALPAPPV.

The protein belongs to the RNA polymerase subunit omega family. The RNAP catalytic core consists of 2 alpha, 1 beta, 1 beta' and 1 omega subunit. When a sigma factor is associated with the core the holoenzyme is formed, which can initiate transcription.

The enzyme catalyses RNA(n) + a ribonucleoside 5'-triphosphate = RNA(n+1) + diphosphate. Functionally, promotes RNA polymerase assembly. Latches the N- and C-terminal regions of the beta' subunit thereby facilitating its interaction with the beta and alpha subunits. This Maricaulis maris (strain MCS10) (Caulobacter maris) protein is DNA-directed RNA polymerase subunit omega.